A 303-amino-acid polypeptide reads, in one-letter code: Coenzyme PQQ synthesis protein B (303 aa).

This sequence belongs to the PqqB family.

It functions in the pathway cofactor biosynthesis; pyrroloquinoline quinone biosynthesis. May be involved in the transport of PQQ or its precursor to the periplasm. This is Coenzyme PQQ synthesis protein B from Pseudomonas putida (strain ATCC 700007 / DSM 6899 / JCM 31910 / BCRC 17059 / LMG 24140 / F1).